The chain runs to 243 residues: NH(3)-dependent NAD(+) synthetase (243 aa).

31–38 contributes to the ATP binding site; the sequence is GLSGGVDS. Residue Asp37 participates in Mg(2+) binding. Residue Arg116 participates in deamido-NAD(+) binding. Thr136 is an ATP binding site. Glu141 lines the Mg(2+) pocket. Deamido-NAD(+) contacts are provided by Lys149 and Asp156. Lys165 and Ser187 together coordinate ATP. Deamido-NAD(+) is bound at residue 233–234; the sequence is HK.

The protein belongs to the NAD synthetase family. Homodimer.

It catalyses the reaction deamido-NAD(+) + NH4(+) + ATP = AMP + diphosphate + NAD(+) + H(+). It functions in the pathway cofactor biosynthesis; NAD(+) biosynthesis; NAD(+) from deamido-NAD(+) (ammonia route): step 1/1. In terms of biological role, catalyzes the ATP-dependent amidation of deamido-NAD to form NAD. Uses ammonia as a nitrogen source. The protein is NH(3)-dependent NAD(+) synthetase of Carboxydothermus hydrogenoformans (strain ATCC BAA-161 / DSM 6008 / Z-2901).